The primary structure comprises 419 residues: MIDLKLLREDPDVVRRSQLSRGEDPALVDALLTADTARRTAISTADSLRAEQKAASKSVGGASPEERPALLQRAKDLAEQVKAAEATQSETETAFTAAHMAIPNVILDGVPAGGEDDYAVLDVVGEPRALDNPKDHLELGESLGLIDMARGAKVAGSRFYFLTGQGALLQLGLLQLALRLAVDNGFIPMIPPVLVRPEVMAGTGFLGAHADEVYRLEADDLYLVGTSEVPMAGYHADEIVDLSEGPLRYAGWSSCFRREAGSYGKDTRGIIRVHQFDKVEGFVYCAPADAEAEHQRLLAWQREMLAQIEVPYRVIDVAAGDLGASAARKFDCEAWVPTQGTYRELTSTSNCTTFQARRLATRYRDANGKPQIAATLNGTLGTTRWLVSILENHQQPDGSARVPAALVGFVGTEVLEPKG.

Residues 45-66 (ADSLRAEQKAASKSVGGASPEE) are disordered. 226 to 228 (TSE) is a binding site for L-serine. ATP is bound by residues 257-259 (RRE) and Val273. An L-serine-binding site is contributed by Glu280. Residue 344–347 (ELTS) participates in ATP binding. Thr379 is a binding site for L-serine.

Belongs to the class-II aminoacyl-tRNA synthetase family. Type-1 seryl-tRNA synthetase subfamily. In terms of assembly, homodimer. The tRNA molecule binds across the dimer.

It localises to the cytoplasm. The catalysed reaction is tRNA(Ser) + L-serine + ATP = L-seryl-tRNA(Ser) + AMP + diphosphate + H(+). It carries out the reaction tRNA(Sec) + L-serine + ATP = L-seryl-tRNA(Sec) + AMP + diphosphate + H(+). Its pathway is aminoacyl-tRNA biosynthesis; selenocysteinyl-tRNA(Sec) biosynthesis; L-seryl-tRNA(Sec) from L-serine and tRNA(Sec): step 1/1. Catalyzes the attachment of serine to tRNA(Ser). Is also able to aminoacylate tRNA(Sec) with serine, to form the misacylated tRNA L-seryl-tRNA(Sec), which will be further converted into selenocysteinyl-tRNA(Sec). The sequence is that of Serine--tRNA ligase from Mycobacterium ulcerans (strain Agy99).